Here is a 188-residue protein sequence, read N- to C-terminus: Nicotinamide/nicotinic acid mononucleotide adenylyltransferase (188 aa).

This sequence belongs to the archaeal NMN adenylyltransferase family.

It catalyses the reaction beta-nicotinamide D-ribonucleotide + ATP + H(+) = diphosphate + NAD(+). The catalysed reaction is nicotinate beta-D-ribonucleotide + ATP + H(+) = deamido-NAD(+) + diphosphate. It participates in cofactor biosynthesis; NAD(+) biosynthesis; NAD(+) from nicotinamide D-ribonucleotide: step 1/1. Its pathway is cofactor biosynthesis; NAD(+) biosynthesis; deamido-NAD(+) from nicotinate D-ribonucleotide: step 1/1. In terms of biological role, dual substrate specificity enzyme that catalyzes the formation of NAD(+) from nicotinamide mononucleotide (NMN) and the formation of deamido-NAD(+) (NaAD) from nicotinate mononucleotide (NaMN). Shows nearly identical catalytic efficiency for both physiological substrates. Plays an essential role in all three routes of NAD biogenesis, de novo synthesis as well as the deamidating and nondeamidating salvage pathways. This chain is Nicotinamide/nicotinic acid mononucleotide adenylyltransferase, found in Acinetobacter baylyi (strain ATCC 33305 / BD413 / ADP1).